A 487-amino-acid chain; its full sequence is Cobyric acid synthase (487 aa).

The region spanning 251–439 is the GATase cobBQ-type domain; that stretch reads KLKVVAPAYP…CHGVLDHPEA (189 aa). The active-site Nucleophile is the Cys-332. His-431 is a catalytic residue.

The protein belongs to the CobB/CobQ family. CobQ subfamily.

It participates in cofactor biosynthesis; adenosylcobalamin biosynthesis. Catalyzes amidations at positions B, D, E, and G on adenosylcobyrinic A,C-diamide. NH(2) groups are provided by glutamine, and one molecule of ATP is hydrogenolyzed for each amidation. The sequence is that of Cobyric acid synthase from Dechloromonas aromatica (strain RCB).